A 606-amino-acid polypeptide reads, in one-letter code: Endo-beta-1,4-xylanase Xyn10C (606 aa).

Residues 1 to 19 (MKKIQQLLMLSLISSTLIA) form the signal peptide. The N-palmitoyl cysteine moiety is linked to residue C20. C20 carries S-diacylglycerol cysteine lipidation. Positions 23-64 (GGGGGSTPTTSSSPQSSSPASTPSSASSSSIISSSSLSSSLS) are disordered. Residues 29–64 (TPTTSSSPQSSSPASTPSSASSSSIISSSSLSSSLS) are compositionally biased toward low complexity. One can recognise a CBM15 domain in the interval 91–242 (GNVVIEVDMA…KSVTITLAQE (152 aa)). A carbohydrate is bound by residues N106 and Q171. A disulfide bridge links C183 with C200. Q217 is a binding site for a carbohydrate. Positions 245–596 (SANVDHLRDL…KPALRGFADA (352 aa)) constitute a GH10 domain. Residues 296–299 (NIMK), H332, and N384 each bind substrate. E385 functions as the Proton donor in the catalytic mechanism. The Nucleophile role is filled by E497. W552 is a binding site for substrate.

It belongs to the glycosyl hydrolase 10 (cellulase F) family.

It localises to the cell outer membrane. It carries out the reaction Endohydrolysis of (1-&gt;4)-beta-D-xylosidic linkages in xylans.. The protein operates within glycan degradation; xylan degradation. Endo-acting xylanase which specifically cleaves internal linkages on the xylan backbone, releasing xylooligosaccharides. Is able to hydrolyze oat spelt xylan, the arabinoxylans from wheat and rye, and glucuronoxylan. Also displays very low activity against xylooligosaccharides. During the xylan degradation process, Xyn10C may act on the soluble xylans and long xylooligosaccharides products released by the secreted xylanases Xyn11A, Xyn11B and Xyn10A. This Cellvibrio japonicus (Pseudomonas fluorescens subsp. cellulosa) protein is Endo-beta-1,4-xylanase Xyn10C (xyn10C).